Reading from the N-terminus, the 541-residue chain is Glutamyl-tRNA(Gln) amidotransferase subunit B, mitochondrial (541 aa).

It belongs to the GatB/GatE family. GatB subfamily. Subunit of the heterotrimeric GatFAB amidotransferase (AdT) complex, composed of A, B and F subunits.

Its subcellular location is the mitochondrion. It catalyses the reaction L-glutamyl-tRNA(Gln) + L-glutamine + ATP + H2O = L-glutaminyl-tRNA(Gln) + L-glutamate + ADP + phosphate + H(+). Allows the formation of correctly charged Gln-tRNA(Gln) through the transamidation of misacylated Glu-tRNA(Gln) in the mitochondria. The reaction takes place in the presence of glutamine and ATP through an activated gamma-phospho-Glu-tRNA(Gln). The protein is Glutamyl-tRNA(Gln) amidotransferase subunit B, mitochondrial of Saccharomyces cerevisiae (strain YJM789) (Baker's yeast).